The sequence spans 378 residues: Anhydro-N-acetylmuramic acid kinase (378 aa).

Position 23–30 (23–30) interacts with ATP; it reads GTSMDGAD.

It belongs to the anhydro-N-acetylmuramic acid kinase family.

It catalyses the reaction 1,6-anhydro-N-acetyl-beta-muramate + ATP + H2O = N-acetyl-D-muramate 6-phosphate + ADP + H(+). It participates in amino-sugar metabolism; 1,6-anhydro-N-acetylmuramate degradation. It functions in the pathway cell wall biogenesis; peptidoglycan recycling. In terms of biological role, catalyzes the specific phosphorylation of 1,6-anhydro-N-acetylmuramic acid (anhMurNAc) with the simultaneous cleavage of the 1,6-anhydro ring, generating MurNAc-6-P. Is required for the utilization of anhMurNAc either imported from the medium or derived from its own cell wall murein, and thus plays a role in cell wall recycling. In Bordetella bronchiseptica (strain ATCC BAA-588 / NCTC 13252 / RB50) (Alcaligenes bronchisepticus), this protein is Anhydro-N-acetylmuramic acid kinase.